Reading from the N-terminus, the 418-residue chain is Putative ion-transport protein YfeO (418 aa).

Transmembrane regions (helical) follow at residues 15 to 37 (PAVAIGIASSLILIVVMKIASVL), 57 to 79 (LWIIGVLTLTGIAVGLVIRFSQG), 99 to 118 (ALPRLIVALILGLAGGVSLG), 149 to 171 (ILASAGTIGALFGTPVAAALIFS), 186 to 208 (LFAPLMAAAAGALTTGLFFHPHF), 221 to 243 (TDILSGAIVAAIAIAAGMVAVWC), 258 to 280 (VLVLGIGGFILGILGVIGGPVSL), 301 to 323 (YFLLAVIKLAALVVAAASGFRGG), 343 to 363 (VPAVPAAITVSCAILGIVLVV), and 376 to 398 (VVVPNTTLLPLLCIVMLPAWLLL).

Belongs to the chloride channel (TC 2.A.49) family.

The protein resides in the cell membrane. This chain is Putative ion-transport protein YfeO (yfeO), found in Shigella flexneri.